We begin with the raw amino-acid sequence, 439 residues long: UPF0229 protein Nham_0975 (439 aa).

Residues 39–106 form a disordered region; the sequence is RSGRISDADG…AGTPDPSMKD (68 aa). Positions 58-76 are enriched in basic and acidic residues; sequence STDEPRFEAAKDSGRREHV.

It belongs to the UPF0229 family.

This is UPF0229 protein Nham_0975 from Nitrobacter hamburgensis (strain DSM 10229 / NCIMB 13809 / X14).